Consider the following 530-residue polypeptide: Histone-arginine methyltransferase CARMER (530 aa).

Positions 141 to 450 (ASQYFQFYGY…QSYDVTIDLH (310 aa)) constitute an SAM-dependent MTase PRMT-type domain. Residues Q154, R163, G187, E209, E238, and T266 each coordinate S-adenosyl-L-methionine. R501 is subject to Asymmetric dimethylarginine; by autocatalysis.

Belongs to the class I-like SAM-binding methyltransferase superfamily. Protein arginine N-methyltransferase family. In terms of assembly, homodimer. In terms of processing, the dimethylated protein is the major form.

The protein localises to the cytoplasm. It is found in the nucleus. It catalyses the reaction L-arginyl-[protein] + 2 S-adenosyl-L-methionine = N(omega),N(omega)-dimethyl-L-arginyl-[protein] + 2 S-adenosyl-L-homocysteine + 2 H(+). Methylates (mono- and asymmetric dimethylation) the guanidino nitrogens of arginyl residues in proteins. May methylate histone H3 at 'Arg-17' and activate transcription via chromatin remodeling. This Drosophila sechellia (Fruit fly) protein is Histone-arginine methyltransferase CARMER (Art4).